The primary structure comprises 388 residues: MSAGPIVERNQDATIYVGGLDEKVSESILWELMVQAGPVVSVNMPKDRVTANHQGFGFVEFMGEEDADYAIKILNMIKLYGKPIKVNKASAHEKNMDVGANIFVGNLDPEVDEKLLYDTFSAFGVILQVPKIMRDVDSGTSKGFAFINFASFEASDTALEAMNGQFLCNRAITVSYAFKRDSKGERHGTAAERMLAAQNPLFPKDRPHQVFSDVPLGVPANTPLAMPGVHAAIAAHATGRPGYQPPPLMGMAQSGYQGQYPPVPPPPPSVTPMPPPMPPTPGMTPRPPPPPSSGMWPPPPPPPPGRTPGPPGMPGMPPPPPPSRFGPPGMGGMPPPPPPGMRYPGGMPPPPPPRYPSAGPGMYPPPPPSRPPAPPSGHGMIPPPPPPS.

RRM domains are found at residues Ala13–Ala91 and Ala100–Lys179. Positions Gln244–Ser388 are disordered. 3 stretches are compositionally biased toward pro residues: residues Pro261–Phe325, Met333–Tyr355, and Met362–Ser388.

It belongs to the SF3B4 family.

Its subcellular location is the nucleus. Functionally, subunit of the splicing factor SF3B required for 'A' complex assembly formed by the stable binding of U2 snRNP to the branchpoint sequence (BPS) in pre-mRNA. Sequence independent binding of SF3A/SF3B complex upstream of the branch site is essential, it may anchor U2 snRNP to the pre-mRNA. May also be involved in the assembly of the 'E' complex. SF3B4 has been found in complex 'B' and 'C' as well. Belongs also to the minor U12-dependent spliceosome, which is involved in the splicing of rare class of nuclear pre-mRNA intron. The chain is Splicing factor 3B subunit 4 (sap-49) from Caenorhabditis elegans.